Here is a 333-residue protein sequence, read N- to C-terminus: NADH-quinone oxidoreductase subunit H (333 aa).

Transmembrane regions (helical) follow at residues 15-35, 88-108, 117-137, 159-179, 191-211, 241-261, 273-293, and 313-333; these read FFIF…FVTY, FILA…VIPF, IGVG…GVLT, ISYE…TGSL, VWYI…AVAE, FFML…TVLF, FIPG…LFIW, and VLLP…ELFF.

Belongs to the complex I subunit 1 family. NDH-1 is composed of 14 different subunits. Subunits NuoA, H, J, K, L, M, N constitute the membrane sector of the complex.

The protein resides in the cell membrane. It carries out the reaction a quinone + NADH + 5 H(+)(in) = a quinol + NAD(+) + 4 H(+)(out). NDH-1 shuttles electrons from NADH, via FMN and iron-sulfur (Fe-S) centers, to quinones in the respiratory chain. The immediate electron acceptor for the enzyme in this species is believed to be ubiquinone. Couples the redox reaction to proton translocation (for every two electrons transferred, four hydrogen ions are translocated across the cytoplasmic membrane), and thus conserves the redox energy in a proton gradient. This subunit may bind ubiquinone. The protein is NADH-quinone oxidoreductase subunit H of Bacillus cytotoxicus (strain DSM 22905 / CIP 110041 / 391-98 / NVH 391-98).